We begin with the raw amino-acid sequence, 70 residues long: MPKQITEIKDFLVLARRKDAKIVKIKKNSLNVKFKVRCSRYLFTLVVNDKDKAEKLKQSLPPGIQVIELK.

It belongs to the eukaryotic ribosomal protein eL38 family.

This chain is Large ribosomal subunit protein eL38 (rpl-38), found in Ostertagia ostertagi (Brown stomach worm).